Consider the following 347-residue polypeptide: UDP-N-acetylenolpyruvoylglucosamine reductase (347 aa).

The FAD-binding PCMH-type domain maps to 33–221; it reads AGGSAERIYL…SGAWFALPRD (189 aa). Residue arginine 180 is part of the active site. Residue serine 250 is the Proton donor of the active site. Glutamate 320 is an active-site residue.

It belongs to the MurB family. FAD is required as a cofactor.

The protein localises to the cytoplasm. The catalysed reaction is UDP-N-acetyl-alpha-D-muramate + NADP(+) = UDP-N-acetyl-3-O-(1-carboxyvinyl)-alpha-D-glucosamine + NADPH + H(+). It functions in the pathway cell wall biogenesis; peptidoglycan biosynthesis. Functionally, cell wall formation. The sequence is that of UDP-N-acetylenolpyruvoylglucosamine reductase from Nitrosospira multiformis (strain ATCC 25196 / NCIMB 11849 / C 71).